The chain runs to 235 residues: Ribonuclease 3 (235 aa).

Residues 7–134 form the RNase III domain; the sequence is LKDLQNKIEI…LIASIYLDKG (128 aa). Glu-47 provides a ligand contact to Mg(2+). Asp-51 is a catalytic residue. Mg(2+) is bound by residues Asp-120 and Glu-123. The active site involves Glu-123. The 70-residue stretch at 161 to 230 folds into the DRBM domain; the sequence is DYKTKLQEII…AKKAIENMEV (70 aa).

It belongs to the ribonuclease III family. Homodimer. It depends on Mg(2+) as a cofactor.

The protein resides in the cytoplasm. It catalyses the reaction Endonucleolytic cleavage to 5'-phosphomonoester.. Functionally, digests double-stranded RNA. Involved in the processing of primary rRNA transcript to yield the immediate precursors to the large and small rRNAs (23S and 16S). Processes some mRNAs, and tRNAs when they are encoded in the rRNA operon. Processes pre-crRNA and tracrRNA of type II CRISPR loci if present in the organism. The chain is Ribonuclease 3 from Clostridium tetani (strain Massachusetts / E88).